A 539-amino-acid chain; its full sequence is Cytochrome c oxidase subunit 1 homolog (539 aa).

2 helical membrane-spanning segments follow: residues 28–48 (LFAA…LLLL) and 75–95 (GVMA…VVAL). His-117 contributes to the heme b binding site. The next 11 membrane-spanning stretches (helical) occupy residues 118 to 138 (TSAV…FYVV), 154 to 174 (FVFW…LLGI), 187 to 207 (VDLW…GTIL), 214 to 234 (ISVA…LHIV), 265 to 285 (GHNA…YYFI), 298 to 318 (LSII…PHHL), 330 to 350 (LGMV…INGL), 368 to 388 (MMVM…MMSI), 402 to 422 (IGHV…GAIY), 443 to 463 (HFWL…VAGI), and 498 to 518 (LGGL…TMTI). Cu cation is bound by residues His-266, His-316, and His-317. Positions 404 and 406 each coordinate heme b.

It belongs to the heme-copper respiratory oxidase family. It depends on Cu(2+) as a cofactor. The cofactor is heme b.

Its subcellular location is the cell membrane. It catalyses the reaction 4 Fe(II)-[cytochrome c] + O2 + 8 H(+)(in) = 4 Fe(III)-[cytochrome c] + 2 H2O + 4 H(+)(out). Its pathway is energy metabolism; oxidative phosphorylation. Cytochrome c oxidase is the component of the respiratory chain that catalyzes the reduction of oxygen to water. Subunits 1-3 form the functional core of the enzyme complex. Co I is the catalytic subunit of the enzyme. Electrons originating in cytochrome c or a quinol are transferred to the bimetallic center formed by a high-spin heme and copper B. This chain is Cytochrome c oxidase subunit 1 homolog (fixN), found in Agrobacterium tumefaciens (strain T37).